Here is a 212-residue protein sequence, read N- to C-terminus: MNSQQCVIIGIAGASASGKSLIAKTIYEELCRDLGTDQIGVIAEDAYYRDQSHLSMEERVKTNYDHPKAMDHELLAQHLRSLKEGDSVEIPVYSYTEHTRMSDTRTMTPKKVIILEGILLLTDPHLRDLMDASVFMDTPLDICFLRRLTRDVAERGRTMESVISQYQKTVRPMFLQFIEPSKQYADIIVPRGGKNRIATDILKARIQHLLAK.

13 to 20 (GASASGKS) serves as a coordination point for ATP.

This sequence belongs to the uridine kinase family.

The protein localises to the cytoplasm. It carries out the reaction uridine + ATP = UMP + ADP + H(+). The enzyme catalyses cytidine + ATP = CMP + ADP + H(+). It participates in pyrimidine metabolism; CTP biosynthesis via salvage pathway; CTP from cytidine: step 1/3. The protein operates within pyrimidine metabolism; UMP biosynthesis via salvage pathway; UMP from uridine: step 1/1. This is Uridine kinase from Shewanella amazonensis (strain ATCC BAA-1098 / SB2B).